We begin with the raw amino-acid sequence, 321 residues long: uncharacterized protein (321 aa).

An N-terminal signal peptide occupies residues 1–22; it reads MKSIYKYTFMLFVFLFGTLMMA.

Belongs to the bacterial solute-binding protein 1 family. WtpA subfamily.

This is an uncharacterized protein from Petrotoga mobilis (strain DSM 10674 / SJ95).